Here is a 342-residue protein sequence, read N- to C-terminus: Methylthioribose-1-phosphate isomerase (342 aa).

Substrate contacts are provided by residues 49-51 (RGA), R86, and Q187. The Proton donor role is filled by D228. 238–239 (NK) provides a ligand contact to substrate.

The protein belongs to the eIF-2B alpha/beta/delta subunits family. MtnA subfamily.

The enzyme catalyses 5-(methylsulfanyl)-alpha-D-ribose 1-phosphate = 5-(methylsulfanyl)-D-ribulose 1-phosphate. It participates in amino-acid biosynthesis; L-methionine biosynthesis via salvage pathway; L-methionine from S-methyl-5-thio-alpha-D-ribose 1-phosphate: step 1/6. Functionally, catalyzes the interconversion of methylthioribose-1-phosphate (MTR-1-P) into methylthioribulose-1-phosphate (MTRu-1-P). In Serratia proteamaculans (strain 568), this protein is Methylthioribose-1-phosphate isomerase.